The following is a 232-amino-acid chain: Large ribosomal subunit protein uL1 (232 aa).

This sequence belongs to the universal ribosomal protein uL1 family. As to quaternary structure, part of the 50S ribosomal subunit.

Functionally, binds directly to 23S rRNA. The L1 stalk is quite mobile in the ribosome, and is involved in E site tRNA release. Its function is as follows. Protein L1 is also a translational repressor protein, it controls the translation of the L11 operon by binding to its mRNA. This Sinorhizobium medicae (strain WSM419) (Ensifer medicae) protein is Large ribosomal subunit protein uL1.